We begin with the raw amino-acid sequence, 176 residues long: Transcriptional repressor NrdR (176 aa).

Residues 3–34 (CPYCGSLETQVKDSRPTDDASAIRRRRVCPDC) fold into a zinc finger. One can recognise an ATP-cone domain in the interval 49–139 (LTVLKKSGRR…VYRNFREARD (91 aa)). A disordered region spans residues 147-176 (LDGAAQPEAPSKDDGGTDEPPAKTRAPTRA).

It belongs to the NrdR family. Zn(2+) is required as a cofactor.

In terms of biological role, negatively regulates transcription of bacterial ribonucleotide reductase nrd genes and operons by binding to NrdR-boxes. The polypeptide is Transcriptional repressor NrdR (Methylocella silvestris (strain DSM 15510 / CIP 108128 / LMG 27833 / NCIMB 13906 / BL2)).